The following is a 901-amino-acid chain: Desmocollin-2 (901 aa).

A signal peptide spans 1–27 (MEAARPSGSWNGALCRLLLLTLAILIF). A propeptide spanning residues 28-135 (ASDACKNVTL…KEKVLRRAKR (108 aa)) is cleaved from the precursor. 2 N-linked (GlcNAc...) asparagine glycosylation sites follow: Asn34 and Asn166. Cadherin domains follow at residues 136-243 (RWAP…YPIF), 244-355 (TEET…LPTF), 356-471 (TRTS…GPEC), 472-579 (NPPI…FIPK), and 580-694 (KTVI…QLGK). Over 136–694 (RWAPIPCSML…IGGGGVQLGK (559 aa)) the chain is Extracellular. N-linked (GlcNAc...) (complex) asparagine glycosylation is present at Asn392. N-linked (GlcNAc...) asparagine glycosylation is found at Asn546 and Asn629. Residues 695-715 (WAILAILLGIALLFCILFTLV) form a helical membrane-spanning segment. Over 716-901 (CGASGTSKQP…RTLAEACMKR (186 aa)) the chain is Cytoplasmic. Residues Ser864, Ser868, and Ser873 each carry the phosphoserine modification.

As to quaternary structure, interacts with DSP, PKP2 and JUP. Interacts with DSG3; the interaction may limit the interaction of DSC3 with p38MAPK family members and therefore repress p38MAPK signaling activation. In terms of tissue distribution, expressed at intercalated disks in the heart, where it is colocalized with CDH2 (at protein level). Expressed in intestinal mucosal cells (at protein level).

The protein localises to the cell membrane. It localises to the cell junction. The protein resides in the desmosome. Its function is as follows. A component of desmosome cell-cell junctions which are required for positive regulation of cellular adhesion. Promotes timely incorporation of DSG2 into desmosome intercellular junctions and promotes interaction of desmosome cell junctions with intermediate filament cytokeratin, via modulation of DSP phosphorylation. Plays an important role in desmosome-mediated maintenance of intestinal epithelial cell intercellular adhesion strength and barrier function. Positively regulates wound healing of intestinal mucosa via promotion of epithelial cell migration, and also plays a role in mechanotransduction of force between intestinal epithelial cells and extracellular matrix. May contribute to epidermal cell positioning (stratification) by mediating differential adhesiveness between cells that express different isoforms. May promote p38MAPK signaling activation that facilitates keratinocyte migration. This is Desmocollin-2 from Homo sapiens (Human).